The following is a 1009-amino-acid chain: Probable beta-galactosidase B (1009 aa).

The first 27 residues, 1–27, serve as a signal peptide directing secretion; the sequence is MKTIAGLSWISALSSLASLPNGLGVSA. Tyr96 provides a ligand contact to substrate. A glycan (N-linked (GlcNAc...) asparagine) is linked at Asn106. Substrate-binding residues include Asn141, Ala142, Glu143, and Asn201. The active-site Proton donor is the Glu202. Tyr271 contacts substrate. A disulfide bridge links Cys277 with Cys330. The active-site Nucleophile is the Glu314. Tyr379 contributes to the substrate binding site. 12 N-linked (GlcNAc...) asparagine glycosylation sites follow: Asn467, Asn495, Asn547, Asn593, Asn632, Asn672, Asn707, Asn775, Asn782, Asn789, Asn795, and Asn914.

Belongs to the glycosyl hydrolase 35 family.

The protein resides in the secreted. The catalysed reaction is Hydrolysis of terminal non-reducing beta-D-galactose residues in beta-D-galactosides.. Its function is as follows. Cleaves beta-linked terminal galactosyl residues from gangliosides, glycoproteins, and glycosaminoglycans. The polypeptide is Probable beta-galactosidase B (lacB) (Pyrenophora tritici-repentis (strain Pt-1C-BFP) (Wheat tan spot fungus)).